Reading from the N-terminus, the 295-residue chain is MEVKDTNCTSLGYGKPPWIFKGSALYQLHLVKAENARAFIPKECKLVEAFGYTLGGFFLASYDDSPAGIFDELVVIAGLVWNPPTSCAWAARVLVGSDEACLHGRKVVGLPSQVARFSKKITALPQKPESKSSSFLRRIGLRTSSNYKNHMDVEVTEIKKQTAMSICNINVNATASQQDSKGWMGPLIKMSLPNFSGRTKYNSDLLKYSCQIECRVRAVQPAKVSGPSESDADKENSSEDQSSNVESVSRVPRGTKRNFSISVMLSKPILALEFNHLKMRVEAPTTVTACSHDTT.

The tract at residues 221-251 is disordered; it reads PAKVSGPSESDADKENSSEDQSSNVESVSRV.

In terms of biological role, required for neoxanthin biosynthesis. Probably not involved directly in the enzymatic conversion of violaxanthin to neoxanthin. Is necessary but not sufficient for neoxanthin synthesis. Seems not required for abscisic acid (ABA) biosynthesis in response to drought stress. This chain is Protein NEOXANTHIN-DEFICIENT 1, found in Solanum lycopersicum (Tomato).